The primary structure comprises 66 residues: Alpha-actitoxin-Ms11a-2 (66 aa).

Residues 1–24 (MASKIFFVLAVFLVMSAVLPESFA) form the signal peptide. Intrachain disulfides connect Cys26-Cys41, Cys33-Cys46, and Cys40-Cys61.

Its subcellular location is the secreted. It localises to the nematocyst. In terms of biological role, alpha-toxins act on postsynaptic membranes, they bind to the nicotinic acetylcholine receptors (nAChR) and thus inhibit them. This toxin competes with alpha-bungarotoxin for binding to orthosteric sites on muscle-type T.carlifornicus (IC(50)=1080 nM) and human alpha-7/CHRNA7 nAChRs (IC(50)=14.13 uM). The protein is Alpha-actitoxin-Ms11a-2 of Metridium senile (Brown sea anemone).